The chain runs to 275 residues: 2-dehydro-3-deoxyphosphooctonate aldolase (275 aa).

This sequence belongs to the KdsA family.

The protein localises to the cytoplasm. The catalysed reaction is D-arabinose 5-phosphate + phosphoenolpyruvate + H2O = 3-deoxy-alpha-D-manno-2-octulosonate-8-phosphate + phosphate. Its pathway is carbohydrate biosynthesis; 3-deoxy-D-manno-octulosonate biosynthesis; 3-deoxy-D-manno-octulosonate from D-ribulose 5-phosphate: step 2/3. The protein operates within bacterial outer membrane biogenesis; lipopolysaccharide biosynthesis. In Francisella philomiragia subsp. philomiragia (strain ATCC 25017 / CCUG 19701 / FSC 153 / O#319-036), this protein is 2-dehydro-3-deoxyphosphooctonate aldolase.